Here is a 237-residue protein sequence, read N- to C-terminus: Synapse differentiation-inducing gene protein 1-like (237 aa).

Disordered stretches follow at residues 1–23 (MESLSELQNPLLPRSPTHLHRPY), 84–111 (AGSCETSFTEAREPLAGPAEEGSEPGQA), and 127–148 (ELQGQEDSQEEESDGTSSESEC). Over 1-161 (MESLSELQNP…FLTLPPRDHL (161 aa)) the chain is Extracellular. The segment covering 129 to 148 (QGQEDSQEEESDGTSSESEC) has biased composition (acidic residues). Residues 162–182 (GLTLFSMLCCFWPLGIAAFYF) form a helical membrane-spanning segment. The Cytoplasmic segment spans residues 183–204 (SQGTSKAISKGDFRLASTTSRR). The chain crosses the membrane as a helical span at residues 205-225 (ALFLATLSIAVGAGLYVAVVV). Topologically, residues 226 to 237 (ALAAYMSQNGHG) are extracellular.

This sequence belongs to the CD225/Dispanin family. As to expression, expression is restricted to the caudate-putamen. Down-regulated in R6/2 transgenic mice, a model for Huntington disease.

The protein localises to the membrane. It is found in the golgi apparatus. Its subcellular location is the cis-Golgi network. The chain is Synapse differentiation-inducing gene protein 1-like (Syndig1l) from Mus musculus (Mouse).